Consider the following 280-residue polypeptide: Thylakoid lumenal protein TL20.3, chloroplastic (280 aa).

A chloroplast-targeting transit peptide spans 1–59 (MAFSSLSPLPMKSLDISRSSSSVSRSPYHFQRYLLRRLQLSSRSNLEIKDSSNTREGCC). The N-terminal 31 residues, 60–90 (SSAESNTWKRILSAAMAAAVIASSSGVPAMA), are a transit peptide targeting the thylakoid. Pentapeptide repeat domains are found at residues 124–163 (ENFR…NFSG) and 169–208 (TLMD…DFSD).

In terms of assembly, interacts with thioredoxin. Interacts in vitro with LTO1.

It localises to the plastid. The protein resides in the chloroplast thylakoid lumen. In terms of biological role, pentapeptide repeat protein of unknown function. Subject to degradation when reduced. In Arabidopsis thaliana (Mouse-ear cress), this protein is Thylakoid lumenal protein TL20.3, chloroplastic.